A 316-amino-acid chain; its full sequence is D-alanine--D-alanine ligase (316 aa).

One can recognise an ATP-grasp domain in the interval K107–I303. A133–Q188 serves as a coordination point for ATP. D256, E269, and N271 together coordinate Mg(2+).

Belongs to the D-alanine--D-alanine ligase family. Mg(2+) is required as a cofactor. Requires Mn(2+) as cofactor.

Its subcellular location is the cytoplasm. The enzyme catalyses 2 D-alanine + ATP = D-alanyl-D-alanine + ADP + phosphate + H(+). The protein operates within cell wall biogenesis; peptidoglycan biosynthesis. Cell wall formation. This chain is D-alanine--D-alanine ligase, found in Geobacter sulfurreducens (strain ATCC 51573 / DSM 12127 / PCA).